The following is a 216-amino-acid chain: Cytidylate kinase (216 aa).

7–15 (GPSGTGKST) provides a ligand contact to ATP.

Belongs to the cytidylate kinase family. Type 1 subfamily.

It is found in the cytoplasm. It catalyses the reaction CMP + ATP = CDP + ADP. The enzyme catalyses dCMP + ATP = dCDP + ADP. This is Cytidylate kinase from Chlamydia trachomatis serovar A (strain ATCC VR-571B / DSM 19440 / HAR-13).